Reading from the N-terminus, the 40-residue chain is Natriuretic peptide PpNP-a (40 aa).

Residues 1 to 8 constitute a propeptide that is removed on maturation; the sequence is SGSKTANI. Positions 1–40 are disordered; sequence SGSKTANIGDGCFGVPIDHIGSTSGMGCGSPRPKPTPGGS. Cys-12 and Cys-28 are joined by a disulfide.

This sequence belongs to the natriuretic peptide family. In terms of tissue distribution, expressed by the venom gland.

It is found in the secreted. In terms of biological role, snake venom natriuretic peptide that targets both NPR1 and NPR2. Exhibits hypotensive and vasodepressor activities. This chain is Natriuretic peptide PpNP-a, found in Pseudechis porphyriacus (Red-bellied black snake).